A 689-amino-acid chain; its full sequence is Protein-glutamine gamma-glutamyltransferase 2 (689 aa).

Active-site residues include C278, H336, and D359. N399, D401, E437, E447, and E452 together coordinate Ca(2+). Residues 427-453 (STKSVGRDSREDITHTYKYPEGSEKER) are disordered. Positions 431–441 (VGRDSREDITH) are enriched in basic and acidic residues. 476 to 483 (RIKLSEGA) lines the GTP pocket. E539 serves as a coordination point for Ca(2+). Position 580–583 (580–583 (RDVY)) interacts with GTP.

The protein belongs to the transglutaminase superfamily. Transglutaminase family. As to quaternary structure, monomer. Ca(2+) is required as a cofactor. In terms of tissue distribution, predominates in mature erythrocytes. Also found in kidney and cardiac muscle.

Its subcellular location is the cytoplasm. It localises to the cytosol. The protein localises to the nucleus. The protein resides in the chromosome. It is found in the secreted. Its subcellular location is the extracellular space. It localises to the extracellular matrix. The protein localises to the cell membrane. The protein resides in the mitochondrion. It carries out the reaction L-glutaminyl-[protein] + L-lysyl-[protein] = [protein]-L-lysyl-N(6)-5-L-glutamyl-[protein] + NH4(+). The catalysed reaction is L-glutaminyl-[protein] + serotonin = 5-serotonyl-L-glutamyl-[protein] + NH4(+). It catalyses the reaction L-glutaminyl-[protein] + dopamine = 5-dopaminyl-L-glutamyl-[protein] + NH4(+). The enzyme catalyses L-glutaminyl-[protein] + histamine = 5-histaminyl-L-glutamyl-[protein] + NH4(+). It carries out the reaction L-glutaminyl-[protein] + (R)-noradrenaline = 5-(R)-noradrenalinyl-L-glutamyl-[protein] + NH4(+). The catalysed reaction is L-glutaminyl-[protein] + H2O = L-glutamyl-[protein] + NH4(+). Acyltransferase activity is regulated by the binding of GTP and Ca(2+): inactivated by GTP, which stabilizes its closed structure, thereby obstructing the accessibility of substrates to the active sites. In contrast, Ca(2+) acts as a cofactor by inducing conformational change to the active open form. In absence of Ca(2+), Mg(2+) may bind Ca(2+)-binding sites, promoting GTP-binding and subsequent inhibition of the acyltransferase activity. Calcium-dependent acyltransferase that catalyzes the formation of covalent bonds between peptide-bound glutamine and various primary amines, such as gamma-amino group of peptide-bound lysine, or mono- and polyamines, thereby producing cross-linked or aminated proteins, respectively. Involved in many biological processes, such as bone development, angiogenesis, wound healing, cellular differentiation, chromatin modification and apoptosis. Acts as a protein-glutamine gamma-glutamyltransferase by mediating the cross-linking of proteins: under physiological conditions, the protein cross-linking activity is inhibited by GTP; inhibition is relieved by Ca(2+) in response to various stresses. When secreted, catalyzes cross-linking of proteins of the extracellular matrix, resulting in the formation of scaffolds. Plays a key role during apoptosis, both by (1) promoting the cross-linking of cytoskeletal proteins resulting in condensation of the cytoplasm, and by (2) mediating cross-linking proteins of the extracellular matrix, resulting in the irreversible formation of scaffolds that stabilize the integrity of the dying cells before their clearance by phagocytosis, thereby preventing the leakage of harmful intracellular components. In addition to protein cross-linking, can use different monoamine substrates to catalyze a vast array of protein post-translational modifications: mediates aminylation of serotonin, dopamine, noradrenaline or histamine into glutamine residues of target proteins to generate protein serotonylation, dopaminylation, noradrenalinylation or histaminylation, respectively. Mediates protein serotonylation of small GTPases during activation and aggregation of platelets, leading to constitutive activation of these GTPases. Plays a key role in chromatin organization by mediating serotonylation and dopaminylation of histone H3. Catalyzes serotonylation of 'Gln-5' of histone H3 (H3Q5ser) during serotonergic neuron differentiation, thereby facilitating transcription. Acts as a mediator of neurotransmission-independent role of nuclear dopamine in ventral tegmental area (VTA) neurons: catalyzes dopaminylation of 'Gln-5' of histone H3 (H3Q5dop), thereby regulating relapse-related transcriptional plasticity in the reward system. Also acts as a protein deamidase by mediating the side chain deamidation of specific glutamine residues of proteins to glutamate. May also act as an isopeptidase cleaving the previously formed cross-links. Also able to participate in signaling pathways independently of its acyltransferase activity: acts as a signal transducer in alpha-1 adrenergic receptor-mediated stimulation of phospholipase C-delta (PLCD) activity and is required for coupling alpha-1 adrenergic agonists to the stimulation of phosphoinositide lipid metabolism. This Gallus gallus (Chicken) protein is Protein-glutamine gamma-glutamyltransferase 2.